Consider the following 293-residue polypeptide: uncharacterized protein (293 aa).

Disordered stretches follow at residues 1 to 114 and 268 to 293; these read MFLR…IPKL and EETA…GRML. Residues S34, S35, and S89 each carry the phosphoserine modification. Basic and acidic residues-rich tracts occupy residues 73–95 and 277–293; these read SSRD…RDKT and GQER…GRML.

This is an uncharacterized protein from Mus musculus (Mouse).